Here is a 217-residue protein sequence, read N- to C-terminus: Putative thymidylate synthase (217 aa).

Cys-139 is an active-site residue.

Belongs to the thymidylate synthase family. Archaeal-type ThyA subfamily. In terms of assembly, monomer.

The protein localises to the cytoplasm. Its pathway is pyrimidine metabolism; dTTP biosynthesis. Its function is as follows. May catalyze the biosynthesis of dTMP using an unknown cosubstrate. The sequence is that of Putative thymidylate synthase from Methanosarcina mazei (strain ATCC BAA-159 / DSM 3647 / Goe1 / Go1 / JCM 11833 / OCM 88) (Methanosarcina frisia).